The primary structure comprises 210 residues: Small ribosomal subunit protein uS7 (210 aa).

Belongs to the universal ribosomal protein uS7 family. As to quaternary structure, component of the small ribosomal subunit. Part of the small subunit (SSU) processome, composed of more than 70 proteins and the RNA chaperone small nucleolar RNA (snoRNA) U3.

The protein localises to the cytoplasm. It is found in the nucleus. It localises to the nucleolus. Component of the small ribosomal subunit. The ribosome is a large ribonucleoprotein complex responsible for the synthesis of proteins in the cell. Part of the small subunit (SSU) processome, first precursor of the small eukaryotic ribosomal subunit. During the assembly of the SSU processome in the nucleolus, many ribosome biogenesis factors, an RNA chaperone and ribosomal proteins associate with the nascent pre-rRNA and work in concert to generate RNA folding, modifications, rearrangements and cleavage as well as targeted degradation of pre-ribosomal RNA by the RNA exosome. The polypeptide is Small ribosomal subunit protein uS7 (rps-5) (Caenorhabditis elegans).